A 196-amino-acid chain; its full sequence is uncharacterized protein (196 aa).

The HD domain maps to 51-164; sequence VAEHSLLVEE…DRIFGKPDPV (114 aa).

This is an uncharacterized protein from Rhodobacter capsulatus (strain ATCC BAA-309 / NBRC 16581 / SB1003).